We begin with the raw amino-acid sequence, 213 residues long: Urease accessory protein UreE (213 aa).

The interval E170–R213 is disordered. The span at H182 to H200 shows a compositional bias: basic and acidic residues.

This sequence belongs to the UreE family.

The protein localises to the cytoplasm. Functionally, involved in urease metallocenter assembly. Binds nickel. Probably functions as a nickel donor during metallocenter assembly. The sequence is that of Urease accessory protein UreE from Burkholderia thailandensis (strain ATCC 700388 / DSM 13276 / CCUG 48851 / CIP 106301 / E264).